Here is a 368-residue protein sequence, read N- to C-terminus: 3-dehydroquinate synthase (368 aa).

NAD(+) is bound by residues 80–85, 114–118, 138–139, Lys151, and Lys160; these read DAESAK, GAATD, and TT. Positions 193, 255, and 271 each coordinate Zn(2+).

It belongs to the sugar phosphate cyclases superfamily. Dehydroquinate synthase family. Requires Co(2+) as cofactor. It depends on Zn(2+) as a cofactor. NAD(+) is required as a cofactor.

Its subcellular location is the cytoplasm. The catalysed reaction is 7-phospho-2-dehydro-3-deoxy-D-arabino-heptonate = 3-dehydroquinate + phosphate. It functions in the pathway metabolic intermediate biosynthesis; chorismate biosynthesis; chorismate from D-erythrose 4-phosphate and phosphoenolpyruvate: step 2/7. In terms of biological role, catalyzes the conversion of 3-deoxy-D-arabino-heptulosonate 7-phosphate (DAHP) to dehydroquinate (DHQ). This chain is 3-dehydroquinate synthase, found in Corynebacterium jeikeium (strain K411).